A 268-amino-acid polypeptide reads, in one-letter code: Inositol polyphosphate multikinase (268 aa).

ATP contacts are provided by residues lysine 27, 86 to 88, and aspartate 99; that span reads ENI. 127-135 is a binding site for substrate; sequence TSGSLGFRI. Aspartate 235 serves as a coordination point for ATP.

Belongs to the inositol phosphokinase (IPK) family.

The protein resides in the cytoplasm. The protein localises to the nucleus. It carries out the reaction 1D-myo-inositol 1,4,5-trisphosphate + 2 ATP = 1D-myo-inositol 1,3,4,5,6-pentakisphosphate + 2 ADP + 2 H(+). The enzyme catalyses 1D-myo-inositol 1,4,5-trisphosphate + ATP = 1D-myo-inositol 1,4,5,6-tetrakisphosphate + ADP + H(+). It catalyses the reaction 1D-myo-inositol 1,4,5-trisphosphate + ATP = 1D-myo-inositol 1,3,4,5-tetrakisphosphate + ADP + H(+). The catalysed reaction is 1D-myo-inositol 1,4,5,6-tetrakisphosphate + ATP = 1D-myo-inositol 1,3,4,5,6-pentakisphosphate + ADP + H(+). Its function is as follows. Inositol phosphate kinase with both monophosphoinositol and diphosphoinositol polyphosphate synthase activities. Able to phosphorylate inositol 1,4,5-trisphosphate (Ins(1,4,5)P3) on both the carbon-3 and carbon-6 positions to synthesize inositol 1,3,4,5-tetrakisphosphate (Ins(1,3,4,5)P4) and inositol 1,4,5,6-tetrakisphosphate (Ins(1,4,5,6)P4), and then to subsequently phosphorylate and convert either isomer of InsP4 to inositol 1,3,4,5,6-pentakisphosphate (Ins(1,3,4,5,6)P5). Also converts (Ins(1,3,4,5,6)P5) to InsP6. Also has a role in transcription regulation. The catalytic activity is required for PHO gene repression by phosphate and for NCR gene activation in response to nitrogen availability, indicating a role for inositol pyrophosphates in these controls. Inositol polyphosphates may be involved in the regulation of chromatin remodeling of transcription. The sequence is that of Inositol polyphosphate multikinase (arg82) from Schizosaccharomyces pombe (strain 972 / ATCC 24843) (Fission yeast).